Reading from the N-terminus, the 1026-residue chain is Probable DNA-directed RNA polymerase II subunit RPB1 homolog (1026 aa).

Zn(2+) contacts are provided by Cys-62, Cys-65, Cys-72, His-75, Cys-102, Cys-105, and Cys-142. The Mg(2+) site is built by Asp-588, Asp-590, and Asp-592.

The protein belongs to the RNA polymerase beta' chain family.

The enzyme catalyses RNA(n) + a ribonucleoside 5'-triphosphate = RNA(n+1) + diphosphate. Functionally, component of the DNA-dependent RNA polymerase that catalyzes the transcription of DNA into RNA using the four ribonucleoside triphosphates as substrates. Largest and catalytic component of RNA polymerase II which synthesizes mRNA precursors and many functional non-coding RNAs. Forms the polymerase active center together with the second largest subunit. The protein is Probable DNA-directed RNA polymerase II subunit RPB1 homolog of Acheta domesticus (House cricket).